Reading from the N-terminus, the 3567-residue chain is Zinc finger homeobox protein 4 (3567 aa).

Met-1 bears the N-acetylmethionine mark. Disordered regions lie at residues 1 to 54, 425 to 480, 522 to 545, and 565 to 611; these read METC…LKTD, LSHS…AYSN, TSSS…VRAS, and SKDS…SPGS. Residues 9-28 show a composition bias toward polar residues; that stretch reads ISRQENGQSTSKLCGTTQLD. Composition is skewed to basic and acidic residues over residues 39-54 and 434-452; these read EPDR…LKTD and KMSE…KESN. Residues 468-480 show a composition bias toward acidic residues; sequence EPGDEDEEDAYSN. 3 C2H2-type zinc fingers span residues 613–636, 644–667, and 699–723; these read IECP…TMMH, LKCP…KEKH, and FRCE…SDKH. Residues 767 to 789 form a C2H2-type 4; degenerate zinc finger; it reads WRCEVCDYETNVARNLRIHMTSE. 3 C2H2-type zinc fingers span residues 917–941, 973–995, and 1021–1045; these read YQCK…TDKH, LKCN…TTNH, and YYCA…SVKH. Residues 1098–1160 form a disordered region; sequence EQHEEAEGAI…EDVATKRSKP (63 aa). 2 stretches are compositionally biased toward basic and acidic residues: residues 1120–1132 and 1148–1160; these read TSER…KNSN and AKEE…RSKP. Lys-1149 participates in a covalent cross-link: Glycyl lysine isopeptide (Lys-Gly) (interchain with G-Cter in SUMO2). 2 C2H2-type zinc fingers span residues 1172-1195 and 1201-1224; these read YQCP…LSQH and ICCP…THLH. The segment at 1254–1324 is disordered; it reads AASEKSERDT…WNKNSSKDVK (71 aa). Basic and acidic residues predominate over residues 1281-1310; sequence MDDKSMAGLEDSKANVEVKNEEQKPTKEPL. Glycyl lysine isopeptide (Lys-Gly) (interchain with G-Cter in SUMO2) cross-links involve residues Lys-1299 and Lys-1324. 2 consecutive C2H2-type zinc fingers follow at residues 1352-1374 and 1380-1403; these read YRCN…SQYH and TMCN…EAGH. The tract at residues 1429 to 1480 is disordered; sequence ETMSQDDHGLEQEMEREYEVDHEGKASPVGSDSSSIPDDMGSEPKRTLPFRK. The span at 1433–1453 shows a compositional bias: basic and acidic residues; it reads QDDHGLEQEMEREYEVDHEGK. The C2H2-type 12 zinc-finger motif lies at 1496-1522; sequence YKCTVCKESFTQKNILLVHYNSVSHLH. Lys-1546 participates in a covalent cross-link: Glycyl lysine isopeptide (Lys-Gly) (interchain with G-Cter in SUMO2). The C2H2-type 13 zinc-finger motif lies at 1548–1572; it reads YKCSICNVAYSQSSTLEIHMRSVLH. Low complexity-rich tracts occupy residues 1761–1772 and 1779–1791; these read TQPQLQPQKQQQ and QQQQ…LLKQ. 2 disordered regions span residues 1761–1791 and 1809–1858; these read TQPQ…LLKQ and SYKE…IASG. Residue Lys-1790 forms a Glycyl lysine isopeptide (Lys-Gly) (interchain with G-Cter in SUMO2) linkage. Residues 1809 to 1845 are compositionally biased toward basic and acidic residues; it reads SYKEAEDISEKPEKPKQEFISEGEGLKEGKDTKKQKS. Residues 1901-1924 form a C2H2-type 14 zinc finger; it reads LECGTCGKLFSNVLILKSHQEHVH. The tract at residues 1948 to 2024 is disordered; the sequence is YPISPSSPET…PPSAPPQVQL (77 aa). 2 stretches are compositionally biased toward pro residues: residues 1955–1974 and 1991–2019; these read PETP…PPQP and QAPP…PSAP. DNA-binding regions (homeobox) lie at residues 2084–2143 and 2181–2240; these read FKRP…RQRN and KRSS…RKSY. The segment at 2267 to 2291 adopts a C2H2-type 15; degenerate zinc-finger fold; the sequence is YQCKKCNVVFPRIFDLITHQKKQCY. Disordered regions lie at residues 2289 to 2311 and 2328 to 2431; these read QCYK…MDAT and AKNA…SPLQ. Residues 2293–2309 are compositionally biased toward acidic residues; that stretch reads DEDDDAQDESQTEDSMD. The span at 2331-2345 shows a compositional bias: low complexity; that stretch reads AAAPAASSGSGTSTP. Positions 2352 to 2370 are enriched in basic and acidic residues; sequence PEPEKTSPKPEYPAEKPKQ. The segment covering 2419-2431 has biased composition (polar residues); sequence SASQTPVPSSPLQ. Residues 2448–2470 form a C2H2-type 16 zinc finger; it reads YQCDQCTVAFPTLELWQEHQHMH. Positions 2507 to 2530 are enriched in polar residues; it reads LGSSLTQMPPQASSSHTTAPTTVA. The segment at 2507-2564 is disordered; that stretch reads LGSSLTQMPPQASSSHTTAPTTVAASLKRKLDDKEDNNCSEKEGGNSGEDQHRDKRLR. Basic and acidic residues predominate over residues 2535–2559; the sequence is RKLDDKEDNNCSEKEGGNSGEDQHR. Residues 2560–2619 constitute a DNA-binding region (homeobox 3); that stretch reads DKRLRTTITPEQLEILYEKYLLDSNPTRKMLDHIAREVGLKKRVVQVWFQNTRARERKGQ. The C2H2-type 17 zinc-finger motif lies at 2630–2653; sequence KRCPFCRALFKAKSALESHIRSRH. Ser-2663 carries the phosphoserine modification. Positions 2764-2785 are enriched in polar residues; it reads AISDATTGDEGNTEMESTTGSS. 2 disordered regions span residues 2764-2811 and 2829-2885; these read AISD…TTPT and HFND…PGHK. Residues 2830 to 2839 show a composition bias toward basic and acidic residues; sequence FNDKDGDHDQ. The span at 2862–2874 shows a compositional bias: low complexity; the sequence is PSSPNPFGSSNPF. Residues 2884 to 2943 constitute a DNA-binding region (homeobox 4); that stretch reads HKRFRTQMSNLQLKVLKACFSDYRTPTMQECEMLGNEIGLPKRVVQVWFQNARAKEKKFK. Residues 2962-2986 form a C2H2-type 18 zinc finger; the sequence is PECTLCGVKYSARLSIRDHIFSKQH. Low complexity predominate over residues 3092–3110; that stretch reads SATSSPALSLSSAPTKPLL. Disordered regions lie at residues 3092–3172 and 3281–3337; these read SATS…KEEK and LQKQ…LESK. Pro residues predominate over residues 3111 to 3125; it reads QTPPPPPPPPPPPPS. Over residues 3126-3135 the composition is skewed to polar residues; it reads SSLSGQQTEQ. A compositionally biased stretch (basic and acidic residues) spans 3153-3172; it reads IKEEELEATKPEKHPKKEEK. Residue Lys-3154 forms a Glycyl lysine isopeptide (Lys-Gly) (interchain with G-Cter in SUMO2) linkage. Positions 3265 to 3294 form a coiled coil; the sequence is ALLQQYQQYQQNLQESLQKQQKQQQEQQQK. The span at 3281-3293 shows a compositional bias: low complexity; it reads LQKQQKQQQEQQQ. Over residues 3294–3314 the composition is skewed to polar residues; that stretch reads KPVQAKTSKVESDQPQNSNDA. Over residues 3315-3337 the composition is skewed to basic and acidic residues; the sequence is SETKEDKSTATESTKEEPQLESK. Residues 3354–3378 form a C2H2-type 19; degenerate zinc finger; that stretch reads FICRKCQMMFTDEDAAVNHQKSFCY. The C2H2-type 20 zinc-finger motif lies at 3398 to 3422; sequence YQCLACDVAISGNEALSQHLQSSLH. Disordered stretches follow at residues 3443–3462 and 3511–3534; these read HSVC…AASS and STSG…ELSQ. The segment covering 3447–3462 has biased composition (low complexity); it reads SPNPNTTSTSQSAASS.

Belongs to the krueppel C2H2-type zinc-finger protein family. Expressed in brain, skeletal muscle and liver. Very low expression in stomach.

It is found in the nucleus. Functionally, may play a role in neural and muscle differentiation. May be involved in transcriptional regulation. In Homo sapiens (Human), this protein is Zinc finger homeobox protein 4 (ZFHX4).